A 652-amino-acid polypeptide reads, in one-letter code: DNA ligase (652 aa).

NAD(+) contacts are provided by residues 29-33 (DAEYD), 78-79 (SL), and Glu107. The active-site N6-AMP-lysine intermediate is Lys109. 4 residues coordinate NAD(+): Arg130, Glu164, Lys278, and Lys302. 4 residues coordinate Zn(2+): Cys395, Cys398, Cys413, and Cys418. The region spanning 577 to 652 (ADDAILSGKT…VKDEAWLLDL (76 aa)) is the BRCT domain.

Belongs to the NAD-dependent DNA ligase family. LigA subfamily. Mg(2+) serves as cofactor. Mn(2+) is required as a cofactor.

The enzyme catalyses NAD(+) + (deoxyribonucleotide)n-3'-hydroxyl + 5'-phospho-(deoxyribonucleotide)m = (deoxyribonucleotide)n+m + AMP + beta-nicotinamide D-nucleotide.. Functionally, DNA ligase that catalyzes the formation of phosphodiester linkages between 5'-phosphoryl and 3'-hydroxyl groups in double-stranded DNA using NAD as a coenzyme and as the energy source for the reaction. It is essential for DNA replication and repair of damaged DNA. This is DNA ligase from Streptococcus thermophilus (strain CNRZ 1066).